The chain runs to 657 residues: Protein translocase subunit SecA 2 (657 aa).

ATP is bound by residues glutamine 93, 111–115 (GEGKT), and aspartate 531.

The protein belongs to the SecA family. As to quaternary structure, monomer and homodimer. Part of the essential Sec protein translocation apparatus which comprises SecA, SecYEG and auxiliary proteins SecDF. Other proteins may also be involved.

The protein localises to the cell inner membrane. It localises to the cytoplasm. It carries out the reaction ATP + H2O + cellular proteinSide 1 = ADP + phosphate + cellular proteinSide 2.. Its function is as follows. Part of the Sec protein translocase complex. Interacts with the SecYEG preprotein conducting channel. Has a central role in coupling the hydrolysis of ATP to the transfer of proteins into and across the cell membrane, serving as an ATP-driven molecular motor driving the stepwise translocation of polypeptide chains across the membrane. This is Protein translocase subunit SecA 2 from Rhodopirellula baltica (strain DSM 10527 / NCIMB 13988 / SH1).